A 124-amino-acid polypeptide reads, in one-letter code: Protein CYSTEINE-RICH TRANSMEMBRANE MODULE 10 (124 aa).

The interval 1–103 (MSYQDPQHPV…PKNKKDKKDS (103 aa)) is disordered. 2 stretches are compositionally biased toward pro residues: residues 27 to 40 (AGYP…PPQY) and 65 to 88 (GYPP…PPPH). Residues 101 to 118 (KDSGGFMEGCLAMLCCCV) traverse the membrane as a helical segment.

The protein belongs to the CYSTM1 family. As to quaternary structure, heterodimers. Interacts with CYSTM7 and WIH1/CYSTM13. As to expression, mostly expressed in stems and,at low levels, in stems, roots, flowers, siliques and leaves.

It localises to the cell membrane. It is found in the cytoplasm. In terms of biological role, involved in resistance to abiotic stress. This is Protein CYSTEINE-RICH TRANSMEMBRANE MODULE 10 from Arabidopsis thaliana (Mouse-ear cress).